The chain runs to 115 residues: Peptidyl-tRNA hydrolase (115 aa).

It belongs to the PTH2 family.

It is found in the cytoplasm. The catalysed reaction is an N-acyl-L-alpha-aminoacyl-tRNA + H2O = an N-acyl-L-amino acid + a tRNA + H(+). In terms of biological role, the natural substrate for this enzyme may be peptidyl-tRNAs which drop off the ribosome during protein synthesis. The protein is Peptidyl-tRNA hydrolase of Methanococcoides burtonii (strain DSM 6242 / NBRC 107633 / OCM 468 / ACE-M).